A 296-amino-acid polypeptide reads, in one-letter code: Acetyl-coenzyme A carboxylase carboxyl transferase subunit beta (296 aa).

The 270-residue stretch at 26 to 295 (VWTKCTNCEQ…PFKVGELIIE (270 aa)) folds into the CoA carboxyltransferase N-terminal domain. Zn(2+)-binding residues include Cys-30, Cys-33, Cys-49, and Cys-52. A C4-type zinc finger spans residues 30–52 (CTNCEQVLYSEELKRNMQVCPKC).

This sequence belongs to the AccD/PCCB family. As to quaternary structure, acetyl-CoA carboxylase is a heterohexamer composed of biotin carboxyl carrier protein (AccB), biotin carboxylase (AccC) and two subunits each of ACCase subunit alpha (AccA) and ACCase subunit beta (AccD). The cofactor is Zn(2+).

It is found in the cytoplasm. It catalyses the reaction N(6)-carboxybiotinyl-L-lysyl-[protein] + acetyl-CoA = N(6)-biotinyl-L-lysyl-[protein] + malonyl-CoA. It functions in the pathway lipid metabolism; malonyl-CoA biosynthesis; malonyl-CoA from acetyl-CoA: step 1/1. Functionally, component of the acetyl coenzyme A carboxylase (ACC) complex. Biotin carboxylase (BC) catalyzes the carboxylation of biotin on its carrier protein (BCCP) and then the CO(2) group is transferred by the transcarboxylase to acetyl-CoA to form malonyl-CoA. This chain is Acetyl-coenzyme A carboxylase carboxyl transferase subunit beta, found in Haemophilus ducreyi (strain 35000HP / ATCC 700724).